Consider the following 635-residue polypeptide: Threonine--tRNA ligase (635 aa).

Positions 1-61 (MINISFPDGS…DNDCKFRILT (61 aa)) constitute a TGS domain. The segment at 242–533 (DHRKLGRELD…LIEEYAGRFP (292 aa)) is catalytic. Cysteine 333, histidine 384, and histidine 510 together coordinate Zn(2+).

The protein belongs to the class-II aminoacyl-tRNA synthetase family. Homodimer. It depends on Zn(2+) as a cofactor.

The protein localises to the cytoplasm. The catalysed reaction is tRNA(Thr) + L-threonine + ATP = L-threonyl-tRNA(Thr) + AMP + diphosphate + H(+). In terms of biological role, catalyzes the attachment of threonine to tRNA(Thr) in a two-step reaction: L-threonine is first activated by ATP to form Thr-AMP and then transferred to the acceptor end of tRNA(Thr). Also edits incorrectly charged L-seryl-tRNA(Thr). In Rickettsia rickettsii (strain Sheila Smith), this protein is Threonine--tRNA ligase.